Reading from the N-terminus, the 272-residue chain is Ribosomal RNA small subunit methyltransferase J (272 aa).

Residues 120–121, 136–137, 171–172, and Asp-188 contribute to the S-adenosyl-L-methionine site; these read RD, ER, and SS.

Belongs to the methyltransferase superfamily. RsmJ family.

It is found in the cytoplasm. The enzyme catalyses guanosine(1516) in 16S rRNA + S-adenosyl-L-methionine = N(2)-methylguanosine(1516) in 16S rRNA + S-adenosyl-L-homocysteine + H(+). Its function is as follows. Specifically methylates the guanosine in position 1516 of 16S rRNA. This chain is Ribosomal RNA small subunit methyltransferase J, found in Colwellia psychrerythraea (strain 34H / ATCC BAA-681) (Vibrio psychroerythus).